A 160-amino-acid chain; its full sequence is MD-2-related lipid-recognition protein ROSY1 (160 aa).

The first 23 residues, 1 to 23, serve as a signal peptide directing secretion; it reads MAISHTQLLLLLLVSLFFSPALC.

Interacts with SYT1. Expressed exclusively in roots, in epidermis and cortex cells of the root elongation zone, and lateral root cap cells at the root tip.

The protein resides in the cytoplasm. Involved in the regulation of gravitropic response and basipetal auxin transport in roots. Involved in salt stress tolerance. May facilitate membrane trafficking and asymmetric cell elongation via SYT1. Binds stigmasterol and dipalmitoyl phosphoethanolamine (DPPE) in vitro. The sequence is that of MD-2-related lipid-recognition protein ROSY1 from Arabidopsis thaliana (Mouse-ear cress).